The chain runs to 509 residues: Glycogen synthase (509 aa).

ADP-alpha-D-glucose is bound at residue Lys47.

This sequence belongs to the glycosyltransferase 1 family. Bacterial/plant glycogen synthase subfamily.

It catalyses the reaction [(1-&gt;4)-alpha-D-glucosyl](n) + ADP-alpha-D-glucose = [(1-&gt;4)-alpha-D-glucosyl](n+1) + ADP + H(+). It functions in the pathway glycan biosynthesis; glycogen biosynthesis. In terms of biological role, synthesizes alpha-1,4-glucan chains using ADP-glucose. The polypeptide is Glycogen synthase (Xanthomonas oryzae pv. oryzae (strain MAFF 311018)).